A 251-amino-acid polypeptide reads, in one-letter code: 1-(5-phosphoribosyl)-5-[(5-phosphoribosylamino)methylideneamino] imidazole-4-carboxamide isomerase (251 aa).

Aspartate 8 acts as the Proton acceptor in catalysis. Catalysis depends on aspartate 131, which acts as the Proton donor.

It belongs to the HisA/HisF family.

It localises to the cytoplasm. The enzyme catalyses 1-(5-phospho-beta-D-ribosyl)-5-[(5-phospho-beta-D-ribosylamino)methylideneamino]imidazole-4-carboxamide = 5-[(5-phospho-1-deoxy-D-ribulos-1-ylimino)methylamino]-1-(5-phospho-beta-D-ribosyl)imidazole-4-carboxamide. Its pathway is amino-acid biosynthesis; L-histidine biosynthesis; L-histidine from 5-phospho-alpha-D-ribose 1-diphosphate: step 4/9. This Burkholderia lata (strain ATCC 17760 / DSM 23089 / LMG 22485 / NCIMB 9086 / R18194 / 383) protein is 1-(5-phosphoribosyl)-5-[(5-phosphoribosylamino)methylideneamino] imidazole-4-carboxamide isomerase.